A 570-amino-acid polypeptide reads, in one-letter code: Phosphoenolpyruvate-protein phosphotransferase (570 aa).

Histidine 189 serves as the catalytic Tele-phosphohistidine intermediate. 2 residues coordinate phosphoenolpyruvate: arginine 296 and arginine 332. Residues glutamate 431 and aspartate 455 each coordinate Mg(2+). Phosphoenolpyruvate contacts are provided by residues 454–455 (ND) and arginine 465. Cysteine 502 (proton donor) is an active-site residue.

This sequence belongs to the PEP-utilizing enzyme family. Homodimer. Requires Mg(2+) as cofactor.

It is found in the cytoplasm. The enzyme catalyses L-histidyl-[protein] + phosphoenolpyruvate = N(pros)-phospho-L-histidyl-[protein] + pyruvate. Its function is as follows. General (non sugar-specific) component of the phosphoenolpyruvate-dependent sugar phosphotransferase system (sugar PTS). This major carbohydrate active-transport system catalyzes the phosphorylation of incoming sugar substrates concomitantly with their translocation across the cell membrane. Enzyme I transfers the phosphoryl group from phosphoenolpyruvate (PEP) to the phosphoryl carrier protein (HPr). This chain is Phosphoenolpyruvate-protein phosphotransferase (ptsI), found in Buchnera aphidicola subsp. Schizaphis graminum (strain Sg).